Consider the following 416-residue polypeptide: Adenylosuccinate synthetase (416 aa).

GTP-binding positions include 13 to 19 and 41 to 43; these read GDEGKGK and GHT. Residue aspartate 14 is the Proton acceptor of the active site. Mg(2+)-binding residues include aspartate 14 and glycine 41. Residues 14–17, 39–42, threonine 126, arginine 140, glutamine 220, threonine 235, and arginine 299 contribute to the IMP site; these read DEGK and NAGH. Residue histidine 42 is the Proton donor of the active site. A substrate-binding site is contributed by 295-301; sequence TTTGRKR. Residues arginine 301, 327–329, and 405–407 each bind GTP; these read KLD and STS.

This sequence belongs to the adenylosuccinate synthetase family. Homodimer. Mg(2+) is required as a cofactor.

The protein resides in the cytoplasm. It carries out the reaction IMP + L-aspartate + GTP = N(6)-(1,2-dicarboxyethyl)-AMP + GDP + phosphate + 2 H(+). It participates in purine metabolism; AMP biosynthesis via de novo pathway; AMP from IMP: step 1/2. Its function is as follows. Plays an important role in the de novo pathway of purine nucleotide biosynthesis. Catalyzes the first committed step in the biosynthesis of AMP from IMP. The protein is Adenylosuccinate synthetase of Campylobacter hominis (strain ATCC BAA-381 / DSM 21671 / CCUG 45161 / LMG 19568 / NCTC 13146 / CH001A).